Consider the following 298-residue polypeptide: MTDPLSRAGLVIVDKPAGMTSHDVVSRCRRIFSTRKVGHAGTLDPMATGVLVIGIERATKIMGLLTLTTKSYAATIRFGQSTSTDDAEGEVLQTISASHLTEVDIEAAVAGLRGDIAQVPSSVSAIKVDGQRAYKLAREGQSVELAARPVRISRFDVLAVRGSGEDLIDVDVEIDCSSGTYIRALARDAGAALGVGGHLTALRRTRVGDFGLDRARTLEELADGATLTLDLDSACRQGFPRRDLDAAEVDAVRNGRPLAPAGIEGTYAAVDADDRVIALLADKGSRTTSVVVLRPANL.

Asp44 acts as the Nucleophile in catalysis.

The protein belongs to the pseudouridine synthase TruB family. Type 1 subfamily.

The enzyme catalyses uridine(55) in tRNA = pseudouridine(55) in tRNA. Responsible for synthesis of pseudouridine from uracil-55 in the psi GC loop of transfer RNAs. The polypeptide is tRNA pseudouridine synthase B (Mycobacteroides abscessus (strain ATCC 19977 / DSM 44196 / CCUG 20993 / CIP 104536 / JCM 13569 / NCTC 13031 / TMC 1543 / L948) (Mycobacterium abscessus)).